Here is a 70-residue protein sequence, read N- to C-terminus: Cold shock-like protein CspJ (70 aa).

Residues 7–67 (GLVKWFNPEK…GPKGPSAVNV (61 aa)) form the CSD domain.

It localises to the cytoplasm. This chain is Cold shock-like protein CspJ (cspJ), found in Salmonella typhimurium (strain SL1344).